The following is a 131-amino-acid chain: Acyl carrier protein 3, mitochondrial (131 aa).

The N-terminal 39 residues, 1–39 (MHCIRSSILQHLRLRVSVRPTSLLQNENGFKSIGIFNFT), are a transit peptide targeting the mitochondrion. In terms of domain architecture, Carrier spans 49-124 (DQILSRVIEL…DVATYILSET (76 aa)). Ser84 carries the O-(pantetheine 4'-phosphoryl)serine modification.

This sequence belongs to the acyl carrier protein (ACP) family. Complex I is composed of at least 49 different subunits. In terms of processing, 4'-phosphopantetheine is transferred from CoA to a specific serine of the apo-ACP-like protein.

The protein resides in the mitochondrion. The protein operates within lipid metabolism; fatty acid biosynthesis. Functionally, carrier of the growing fatty acid chain in fatty acid biosynthesis. May be involved in the synthesis of short and medium chain fatty acids. Accessory and non-catalytic subunit of the mitochondrial membrane respiratory chain NADH dehydrogenase (Complex I), which functions in the transfer of electrons from NADH to the respiratory chain. The polypeptide is Acyl carrier protein 3, mitochondrial (MTACP2) (Arabidopsis thaliana (Mouse-ear cress)).